The chain runs to 395 residues: Elongation factor Tu (395 aa).

Positions 10 to 204 (KEHANIGTIG…AVDDYIPTPE (195 aa)) constitute a tr-type G domain. The interval 19–26 (GHVDHGKT) is G1. 19-26 (GHVDHGKT) is a GTP binding site. A Mg(2+)-binding site is contributed by Thr-26. The interval 60–64 (GITIN) is G2. The interval 81–84 (DCPG) is G3. Residues 81–85 (DCPGH) and 136–139 (NKAD) each bind GTP. The G4 stretch occupies residues 136–139 (NKAD). A G5 region spans residues 174–176 (SAL).

Belongs to the TRAFAC class translation factor GTPase superfamily. Classic translation factor GTPase family. EF-Tu/EF-1A subfamily. Monomer.

The protein resides in the cytoplasm. It carries out the reaction GTP + H2O = GDP + phosphate + H(+). In terms of biological role, GTP hydrolase that promotes the GTP-dependent binding of aminoacyl-tRNA to the A-site of ribosomes during protein biosynthesis. This Staphylococcus carnosus (strain TM300) protein is Elongation factor Tu.